Consider the following 291-residue polypeptide: m-AAA protease-interacting protein 1, mitochondrial (291 aa).

The transit peptide at Met-1–Tyr-96 directs the protein to the mitochondrion.

As to quaternary structure, interacts with AFG3L2. Interacts with SPG7. Interacts with SMDT1/EMRE (via the N-terminal transit peptide); interaction is direct and takes place before maturation of SMDT1/EMRE.

It localises to the mitochondrion matrix. Functionally, promotes sorting of SMDT1/EMRE in mitochondria by ensuring its maturation. Interacts with the transit peptide region of SMDT1/EMRE precursor protein in the mitochondrial matrix, leading to protect it against protein degradation by YME1L1, thereby ensuring SMDT1/EMRE maturation by the mitochondrial processing peptidase (PMPCA and PMPCB). The polypeptide is m-AAA protease-interacting protein 1, mitochondrial (Mus musculus (Mouse)).